A 102-amino-acid chain; its full sequence is MTKSELIELLIDQQSHLPVKDVEQAIKAMLEHMSDSLANGERIEIRGFGSFSLHYRAPRIGRNPKTGESVELSAKYVPHFKPGKELRELVNLPENSEINELN.

Belongs to the bacterial histone-like protein family. As to quaternary structure, heterodimer of an alpha and a beta chain.

Its function is as follows. This protein is one of the two subunits of integration host factor, a specific DNA-binding protein that functions in genetic recombination as well as in transcriptional and translational control. This is Integration host factor subunit beta from Marinomonas sp. (strain MWYL1).